We begin with the raw amino-acid sequence, 320 residues long: Mycothiol acetyltransferase (320 aa).

N-acetyltransferase domains lie at 16–141 (RQVR…RSLR) and 152–320 (LQIR…AALA). E36 contacts 1D-myo-inositol 2-(L-cysteinylamino)-2-deoxy-alpha-D-glucopyranoside. Acetyl-CoA is bound by residues 80–82 (LVV) and 88–93 (RRGIAT). 3 residues coordinate 1D-myo-inositol 2-(L-cysteinylamino)-2-deoxy-alpha-D-glucopyranoside: E179, K229, and E239. Acetyl-CoA contacts are provided by residues 243–245 (LGV) and 250–256 (QGRGLGR). Residue Y284 participates in 1D-myo-inositol 2-(L-cysteinylamino)-2-deoxy-alpha-D-glucopyranoside binding. Acetyl-CoA is bound at residue 289–294 (NIAAVR).

This sequence belongs to the acetyltransferase family. MshD subfamily. Monomer.

The catalysed reaction is 1D-myo-inositol 2-(L-cysteinylamino)-2-deoxy-alpha-D-glucopyranoside + acetyl-CoA = mycothiol + CoA + H(+). Its function is as follows. Catalyzes the transfer of acetyl from acetyl-CoA to desacetylmycothiol (Cys-GlcN-Ins) to form mycothiol. In Mycobacterium marinum (strain ATCC BAA-535 / M), this protein is Mycothiol acetyltransferase.